The chain runs to 325 residues: Tetraacyldisaccharide 4'-kinase (325 aa).

Residue 53–60 (SVGGNGKT) participates in ATP binding.

It belongs to the LpxK family.

The catalysed reaction is a lipid A disaccharide + ATP = a lipid IVA + ADP + H(+). It functions in the pathway glycolipid biosynthesis; lipid IV(A) biosynthesis; lipid IV(A) from (3R)-3-hydroxytetradecanoyl-[acyl-carrier-protein] and UDP-N-acetyl-alpha-D-glucosamine: step 6/6. Its function is as follows. Transfers the gamma-phosphate of ATP to the 4'-position of a tetraacyldisaccharide 1-phosphate intermediate (termed DS-1-P) to form tetraacyldisaccharide 1,4'-bis-phosphate (lipid IVA). The protein is Tetraacyldisaccharide 4'-kinase of Mannheimia succiniciproducens (strain KCTC 0769BP / MBEL55E).